Consider the following 316-residue polypeptide: Methionyl-tRNA formyltransferase (316 aa).

111–114 (GLLP) contributes to the (6S)-5,6,7,8-tetrahydrofolate binding site.

The protein belongs to the Fmt family.

The enzyme catalyses L-methionyl-tRNA(fMet) + (6R)-10-formyltetrahydrofolate = N-formyl-L-methionyl-tRNA(fMet) + (6S)-5,6,7,8-tetrahydrofolate + H(+). Its function is as follows. Attaches a formyl group to the free amino group of methionyl-tRNA(fMet). The formyl group appears to play a dual role in the initiator identity of N-formylmethionyl-tRNA by promoting its recognition by IF2 and preventing the misappropriation of this tRNA by the elongation apparatus. This is Methionyl-tRNA formyltransferase from Chlamydia trachomatis serovar L2b (strain UCH-1/proctitis).